A 782-amino-acid chain; its full sequence is DnaJ homolog subfamily C member 16 (782 aa).

A signal peptide spans 1–25 (MEVRKLSISWQFLIVLVLILQILSA). The Cytoplasmic portion of the chain corresponds to 26–535 (LDFDPYKVLG…DSIFHNNWRE (510 aa)). The J domain maps to 29 to 93 (DPYKVLGVSR…EKRSNYDQYG (65 aa)). In terms of domain architecture, Thioredoxin spans 119–247 (FYFDESFFHF…LRQFVESLLP (129 aa)). The chain crosses the membrane as a helical; Anchor for type IV membrane protein span at residues 536 to 556 (MMPLLSLIFSALFILFGTVIV). Topologically, residues 557–782 (QAFSDSSDER…FYIPSWPELD (226 aa)) are extracellular. Positions 562 to 593 (SSDERESSPPDKEEAQEKTGKTEPSFTKENSS) are disordered. Residues 563 to 582 (SDERESSPPDKEEAQEKTGK) show a composition bias toward basic and acidic residues. The span at 583-593 (TEPSFTKENSS) shows a compositional bias: polar residues. A glycan (N-linked (GlcNAc...) asparagine) is linked at Asn631.

The protein localises to the endoplasmic reticulum membrane. Functionally, plays an important role in regulating the size of autophagosomes during the formation process. The chain is DnaJ homolog subfamily C member 16 (DNAJC16) from Pongo abelii (Sumatran orangutan).